We begin with the raw amino-acid sequence, 232 residues long: MSACQTPIIVALDFPTRDAALKLADQLDPKLCRVKVGKELFTSCAAEIVGTLRDKGFEVFLDLKFHDIPNTTAMAVKAAAEMGVWMVNVHCSGGLRMMAACREELDKRSGPQPLLIGVTVLTSMEREDLAGIGLDIEPQEQVLRLAALAEKAGMDGLVCSALEATALKTAHPSLQLVTPGIRPAGSAQDDQRRILTPRQALDAGSDYLVIGRPISQAADPAKALASVVAELA.

Substrate-binding positions include aspartate 13, lysine 35, 62 to 71 (DLKFHDIPNT), threonine 122, arginine 182, glutamine 191, glycine 211, and arginine 212. The Proton donor role is filled by lysine 64.

The protein belongs to the OMP decarboxylase family. Type 1 subfamily. In terms of assembly, homodimer.

The enzyme catalyses orotidine 5'-phosphate + H(+) = UMP + CO2. It participates in pyrimidine metabolism; UMP biosynthesis via de novo pathway; UMP from orotate: step 2/2. Functionally, catalyzes the decarboxylation of orotidine 5'-monophosphate (OMP) to uridine 5'-monophosphate (UMP). The polypeptide is Orotidine 5'-phosphate decarboxylase (Pseudomonas fluorescens (strain Pf0-1)).